Here is a 316-residue protein sequence, read N- to C-terminus: Putative ring-cleaving dioxygenase MhqA (316 aa).

VOC domains follow at residues 5-131 (GIHH…LTAD) and 154-278 (GLGP…LSTD). Fe cation contacts are provided by His-8, His-226, and Glu-274.

It belongs to the extradiol ring-cleavage dioxygenase family. It depends on Fe(2+) as a cofactor.

It localises to the cytoplasm. Putative ring-cleavage dioxygenase that may contribute to the degradation of aromatic compounds. The sequence is that of Putative ring-cleaving dioxygenase MhqA (mhqA) from Bacillus subtilis (strain 168).